Reading from the N-terminus, the 427-residue chain is Serine hydroxymethyltransferase (427 aa).

122-124 contributes to the (6S)-5,6,7,8-tetrahydrofolate binding site; that stretch reads GHI. K228 carries the post-translational modification N6-(pyridoxal phosphate)lysine.

Belongs to the SHMT family. In terms of assembly, homodimer. Requires pyridoxal 5'-phosphate as cofactor.

It is found in the cytoplasm. It participates in amino-acid biosynthesis; glycine biosynthesis; glycine from L-serine: step 1/1. Functionally, catalyzes the reversible interconversion of serine and glycine with a modified folate serving as the one-carbon carrier. Also exhibits a pteridine-independent aldolase activity toward beta-hydroxyamino acids, producing glycine and aldehydes, via a retro-aldol mechanism. This chain is Serine hydroxymethyltransferase, found in Thermococcus onnurineus (strain NA1).